The chain runs to 406 residues: Kelch domain-containing protein 2 (406 aa).

Kelch repeat units lie at residues 31–85, 92–136, 148–207, 221–259, 271–311, and 322–359; these read ERSG…NTEG, SGSC…ERID, LGVW…AWSQ, HACA…NELI, HSLT…IQFN, and HTAC…IFSV.

In terms of assembly, component of a CRL2(KLHDC2) E3 ubiquitin-protein ligase complex, also named ECS(KLHDC2) complex, composed of CUL2, Elongin BC (ELOB and ELOC), RBX1 and substrate-specific adapter KLHDC2. May form oligomers as a KLHDC2-ELOB-ELOC complex; this interaction is autoinhibitory for the E3 ligase complex as the substrate-binding site of KLHDC2 is blocked in the oligomer. Interacts with CREB3; interaction is direct and specific as it does not interact with CREB1, ATF4, ATF6, JUN, FOS, CEBPA or herpes simplex virus transactivator VP16. In terms of processing, autoubiquitinated by the CRL2(KLHDC2) E3 ligase complex.

The protein localises to the nucleus. It participates in protein modification; protein ubiquitination. Its function is as follows. Substrate-recognition component of a Cul2-RING (CRL2) E3 ubiquitin-protein ligase complex of the DesCEND (destruction via C-end degrons) pathway, which recognizes a C-degron located at the extreme C terminus of target proteins, leading to their ubiquitination and degradation. The C-degron recognized by the DesCEND pathway is usually a motif of less than ten residues and can be present in full-length proteins, truncated proteins or proteolytically cleaved forms. The CRL2(KLHDC2) complex specifically recognizes proteins with a diglycine (Gly-Gly) at the C-terminus, leading to their ubiquitination and degradation. The CRL2(KLHDC2) complex mediates ubiquitination and degradation of truncated SELENOK and SELENOS selenoproteins produced by failed UGA/Sec decoding, which end with a diglycine. The CRL2(KLHDC2) complex also recognizes proteolytically cleaved proteins ending with Gly-Gly, such as the N-terminal fragment of USP1, leading to their degradation. May also act as an indirect repressor of CREB3-mediated transcription by interfering with CREB3-DNA-binding. The polypeptide is Kelch domain-containing protein 2 (Mus musculus (Mouse)).